The following is a 1478-amino-acid chain: FYVE and coiled-coil domain-containing protein 1 (1478 aa).

A2 carries the N-acetylalanine modification. Residues 4 to 33 (TNAESQLQRIIRDLQDAVTELSKEFQEAGE) are a coiled coil. The 134-residue stretch at 36-169 (TDDSTSLHKF…VQFDLASRGF (134 aa)) folds into the RUN domain. At S196 the chain carries Phosphoserine. Residues 225-280 (NNEALEGFDEMRLELDQLEVREKQLRERMQQLDRENQELRAAVSQQGEQLQTERER) are a coiled coil. S342 bears the Phosphoserine mark. T381 is subject to Phosphothreonine. Coiled coils occupy residues 394–555 (SDAA…MLER) and 596–1151 (QEAQ…KDAL). The segment at 586–613 (GKPEEEQRGLQEAQLDDTKVQEGSQEEE) is disordered. Position 878 is a phosphoserine (S878). An FYVE-type zinc finger spans residues 1173 to 1231 (DTEANHCLDCKREFSWMVRRHHCRICGRIFCYYCCNNYVLSKHGGKKERCCRACFQKLS). Residues C1179, C1182, C1195, C1198, C1203, C1206, C1223, and C1226 each contribute to the Zn(2+) site. Over residues 1231–1261 (SEGPGSPDSSGSGTSQGEPSPALSPASPGPQ) the composition is skewed to low complexity. 2 disordered regions span residues 1231–1277 (SEGP…PPDD) and 1294–1332 (SGSSLPETPTETDSLDPNAAEQDTTSTSLTPEDTEDMPV). Composition is skewed to polar residues over residues 1294–1305 (SGSSLPETPTET) and 1314–1324 (EQDTTSTSLTP). The 130-residue stretch at 1337-1466 (EICLLKSGEL…SKKVFYHLTV (130 aa)) folds into the GOLD domain.

As to quaternary structure, can form homodimers. Interacts (via C-terminus) with MAP1LC3B. Interacts with RAB7A; the interaction with RAB7A induces FYCO1 recruitment to late endosomal/lysosomal compartments. Interacts with MAP1LC3B. Expressed in heart and skeletal muscle.

The protein resides in the cytoplasmic vesicle. The protein localises to the autophagosome. It localises to the endosome. It is found in the lysosome. May mediate microtubule plus end-directed vesicle transport. The chain is FYVE and coiled-coil domain-containing protein 1 (FYCO1) from Homo sapiens (Human).